We begin with the raw amino-acid sequence, 426 residues long: UDP-N-acetylmuramoylalanine--D-glutamate ligase (426 aa).

An ATP-binding site is contributed by G112–T118.

It belongs to the MurCDEF family.

The protein localises to the cytoplasm. It carries out the reaction UDP-N-acetyl-alpha-D-muramoyl-L-alanine + D-glutamate + ATP = UDP-N-acetyl-alpha-D-muramoyl-L-alanyl-D-glutamate + ADP + phosphate + H(+). The protein operates within cell wall biogenesis; peptidoglycan biosynthesis. In terms of biological role, cell wall formation. Catalyzes the addition of glutamate to the nucleotide precursor UDP-N-acetylmuramoyl-L-alanine (UMA). The sequence is that of UDP-N-acetylmuramoylalanine--D-glutamate ligase from Thermosipho melanesiensis (strain DSM 12029 / CIP 104789 / BI429).